A 101-amino-acid polypeptide reads, in one-letter code: uncharacterized protein (101 aa).

A run of 2 helical transmembrane segments spans residues 3-23 (IVYEYAISTNWIWLYVWLFLF) and 39-59 (AFLSLPPIVSFALSVATLIFF).

It localises to the membrane. This is an uncharacterized protein from Saccharomyces cerevisiae (strain ATCC 204508 / S288c) (Baker's yeast).